Consider the following 273-residue polypeptide: Formamidopyrimidine-DNA glycosylase (273 aa).

P2 serves as the catalytic Schiff-base intermediate with DNA. Residue E3 is the Proton donor of the active site. K59 (proton donor; for beta-elimination activity) is an active-site residue. The DNA site is built by H92 and R111. Residues 239–273 (KVYGKTDEPCVVCGKPIEKIKLNGRGTHFCPNCQK) form an FPG-type zinc finger. R263 (proton donor; for delta-elimination activity) is an active-site residue.

The protein belongs to the FPG family. As to quaternary structure, monomer. Zn(2+) serves as cofactor.

The catalysed reaction is Hydrolysis of DNA containing ring-opened 7-methylguanine residues, releasing 2,6-diamino-4-hydroxy-5-(N-methyl)formamidopyrimidine.. The enzyme catalyses 2'-deoxyribonucleotide-(2'-deoxyribose 5'-phosphate)-2'-deoxyribonucleotide-DNA = a 3'-end 2'-deoxyribonucleotide-(2,3-dehydro-2,3-deoxyribose 5'-phosphate)-DNA + a 5'-end 5'-phospho-2'-deoxyribonucleoside-DNA + H(+). Functionally, involved in base excision repair of DNA damaged by oxidation or by mutagenic agents. Acts as a DNA glycosylase that recognizes and removes damaged bases. Has a preference for oxidized purines, such as 7,8-dihydro-8-oxoguanine (8-oxoG). Has AP (apurinic/apyrimidinic) lyase activity and introduces nicks in the DNA strand. Cleaves the DNA backbone by beta-delta elimination to generate a single-strand break at the site of the removed base with both 3'- and 5'-phosphates. This is Formamidopyrimidine-DNA glycosylase from Listeria monocytogenes serotype 4b (strain F2365).